The following is a 264-amino-acid chain: Triosephosphate isomerase (264 aa).

13–15 (NWK) is a substrate binding site. The Electrophile role is filled by His-106. Residue Glu-179 is the Proton acceptor of the active site. Residues Gly-185, Ser-223, and 244 to 245 (GG) contribute to the substrate site.

The protein belongs to the triosephosphate isomerase family. As to quaternary structure, homodimer.

The protein localises to the cytoplasm. It catalyses the reaction D-glyceraldehyde 3-phosphate = dihydroxyacetone phosphate. The protein operates within carbohydrate biosynthesis; gluconeogenesis. It participates in carbohydrate degradation; glycolysis; D-glyceraldehyde 3-phosphate from glycerone phosphate: step 1/1. In terms of biological role, involved in the gluconeogenesis. Catalyzes stereospecifically the conversion of dihydroxyacetone phosphate (DHAP) to D-glyceraldehyde-3-phosphate (G3P). The protein is Triosephosphate isomerase of Acinetobacter baumannii (strain SDF).